The primary structure comprises 363 residues: NAD(P)H-quinone oxidoreductase subunit 1, chloroplastic (363 aa).

The next 7 membrane-spanning stretches (helical) occupy residues 30 to 50 (FIPI…IVWL), 104 to 124 (IAVI…HLVL), 129 to 149 (IGVF…LMSG), 248 to 268 (YSGI…LVSS), 269 to 289 (LFVT…IFVF), 300 to 320 (VFEP…FLFI), and 336 to 356 (LLNL…LLTT).

This sequence belongs to the complex I subunit 1 family. NDH is composed of at least 16 different subunits, 5 of which are encoded in the nucleus.

It localises to the plastid. Its subcellular location is the chloroplast thylakoid membrane. The catalysed reaction is a plastoquinone + NADH + (n+1) H(+)(in) = a plastoquinol + NAD(+) + n H(+)(out). The enzyme catalyses a plastoquinone + NADPH + (n+1) H(+)(in) = a plastoquinol + NADP(+) + n H(+)(out). Functionally, NDH shuttles electrons from NAD(P)H:plastoquinone, via FMN and iron-sulfur (Fe-S) centers, to quinones in the photosynthetic chain and possibly in a chloroplast respiratory chain. The immediate electron acceptor for the enzyme in this species is believed to be plastoquinone. Couples the redox reaction to proton translocation, and thus conserves the redox energy in a proton gradient. This is NAD(P)H-quinone oxidoreductase subunit 1, chloroplastic from Morus indica (Mulberry).